The following is a 155-amino-acid chain: 6,7-dimethyl-8-ribityllumazine synthase (155 aa).

5-amino-6-(D-ribitylamino)uracil contacts are provided by residues Phe-23, 57–59 (AFE), and 81–83 (AVI). 86–87 (ST) is a (2S)-2-hydroxy-3-oxobutyl phosphate binding site. The active-site Proton donor is His-89. Phe-114 contacts 5-amino-6-(D-ribitylamino)uracil. Arg-128 is a (2S)-2-hydroxy-3-oxobutyl phosphate binding site.

Belongs to the DMRL synthase family.

The enzyme catalyses (2S)-2-hydroxy-3-oxobutyl phosphate + 5-amino-6-(D-ribitylamino)uracil = 6,7-dimethyl-8-(1-D-ribityl)lumazine + phosphate + 2 H2O + H(+). Its pathway is cofactor biosynthesis; riboflavin biosynthesis; riboflavin from 2-hydroxy-3-oxobutyl phosphate and 5-amino-6-(D-ribitylamino)uracil: step 1/2. Functionally, catalyzes the formation of 6,7-dimethyl-8-ribityllumazine by condensation of 5-amino-6-(D-ribitylamino)uracil with 3,4-dihydroxy-2-butanone 4-phosphate. This is the penultimate step in the biosynthesis of riboflavin. This chain is 6,7-dimethyl-8-ribityllumazine synthase, found in Trichlorobacter lovleyi (strain ATCC BAA-1151 / DSM 17278 / SZ) (Geobacter lovleyi).